The primary structure comprises 305 residues: tRNA pseudouridine synthase B (305 aa).

Asp-39 (nucleophile) is an active-site residue. In terms of domain architecture, PUA spans 237–305 (LPVIIVPGEF…FLLKPHKVLK (69 aa)).

It belongs to the pseudouridine synthase TruB family. Type 1 subfamily.

It carries out the reaction uridine(55) in tRNA = pseudouridine(55) in tRNA. Responsible for synthesis of pseudouridine from uracil-55 in the psi GC loop of transfer RNAs. In Moorella thermoacetica (strain ATCC 39073 / JCM 9320), this protein is tRNA pseudouridine synthase B.